The following is a 376-amino-acid chain: PqqA peptide cyclase (376 aa).

One can recognise a Radical SAM core domain in the interval 4-219 (VPPPLSVLLE…VETARRSLGD (216 aa)). The [4Fe-4S] cluster site is built by Cys-18, Cys-22, and Cys-25.

This sequence belongs to the radical SAM superfamily. PqqE family. As to quaternary structure, interacts with PqqD. The interaction is necessary for activity of PqqE. It depends on [4Fe-4S] cluster as a cofactor.

The enzyme catalyses [PQQ precursor protein] + S-adenosyl-L-methionine = E-Y cross-linked-[PQQ precursor protein] + 5'-deoxyadenosine + L-methionine + H(+). It functions in the pathway cofactor biosynthesis; pyrroloquinoline quinone biosynthesis. Catalyzes the cross-linking of a glutamate residue and a tyrosine residue in the PqqA protein as part of the biosynthesis of pyrroloquinoline quinone (PQQ). The chain is PqqA peptide cyclase from Xanthomonas campestris pv. campestris (strain 8004).